A 527-amino-acid polypeptide reads, in one-letter code: Bifunctional purine biosynthesis protein PurH (527 aa).

The region spanning 9-156 is the MGS-like domain; that stretch reads NAKRPIRRAL…KNHPSVAVVV (148 aa).

It belongs to the PurH family.

It carries out the reaction (6R)-10-formyltetrahydrofolate + 5-amino-1-(5-phospho-beta-D-ribosyl)imidazole-4-carboxamide = 5-formamido-1-(5-phospho-D-ribosyl)imidazole-4-carboxamide + (6S)-5,6,7,8-tetrahydrofolate. It catalyses the reaction IMP + H2O = 5-formamido-1-(5-phospho-D-ribosyl)imidazole-4-carboxamide. The protein operates within purine metabolism; IMP biosynthesis via de novo pathway; 5-formamido-1-(5-phospho-D-ribosyl)imidazole-4-carboxamide from 5-amino-1-(5-phospho-D-ribosyl)imidazole-4-carboxamide (10-formyl THF route): step 1/1. It functions in the pathway purine metabolism; IMP biosynthesis via de novo pathway; IMP from 5-formamido-1-(5-phospho-D-ribosyl)imidazole-4-carboxamide: step 1/1. This is Bifunctional purine biosynthesis protein PurH from Mycolicibacterium paratuberculosis (strain ATCC BAA-968 / K-10) (Mycobacterium paratuberculosis).